A 120-amino-acid polypeptide reads, in one-letter code: Large ribosomal subunit protein bL20 (120 aa).

It belongs to the bacterial ribosomal protein bL20 family.

Binds directly to 23S ribosomal RNA and is necessary for the in vitro assembly process of the 50S ribosomal subunit. It is not involved in the protein synthesizing functions of that subunit. This is Large ribosomal subunit protein bL20 from Pseudoalteromonas translucida (strain TAC 125).